Here is an 892-residue protein sequence, read N- to C-terminus: MKTHPQAILLCVLFFITFGLLHVVEAGNQEGFISLDCGLSPNEPPYVDAATDLTYTTDNDFVQSGKTGTIDKELESTYNKPILQLRYFPEGVRNCYTLNVTLGTNYLIRASFVYGNYDGLNKELEFDLYLGPNLWANVNTAVYLMNGVTTEEIIHSTKSKVLQVCLIKTGESIPIINSLELRPLINDTYNTQSGSLKYLFRNYFSTSRRIIRYPNDVNDRHWYPFFDEDAWTELTTNLNVNSSNGYDPPKFVMASASTPISKNAPFNFTWSLIPSTAKFYSYMHFADIQTLQANETREFDMMLNGNLALERYRPKTFATGTIYFIKPQICEGGQCIIELLKTSKSTLPPLCSALEVFTVIDFPELETNQDDVIAIKNIQNTYGVSKTSWQGDPCVPKRFMWDGLNCNNSYISTPPTITFLNLSSSHLTGIIASAIQNLTHLQNLDLSNNNLTGGVPEFLAGLKSLLVINLSGNNLSGSVPQTLLQKKGLKLNLEGNIYLNCPDGSCVSKDGNGGAKKKNVVVLVVVSIALVVVLGSALALFLVFRKRKTPRNEVSRTSRSLDPTITTKNRRFTYSEVVKMTNNFEKILGKGGFGMVYHGTVNDAEQVAVKMLSPSSSQGYKEFKAEVELLLRVHHKNLVGLVGYCDEGENLSLIYEYMAKGDLKEHMLGNQGVSILDWKTRLKIVAESAQGLEYLHNGCKPPMVHRDVKTTNILLDEHFQAKLADFGLSRSFPLEGETRVDTVVAGTPGYLDPEYYRTNWLNEKSDVYSFGIVLLEIITNQHVINQSREKPHIAEWVGVMLTKGDIKSIIDPKFSGDYDAGSVWRAVELAMSCVNPSSTGRPTMSQVVIELNECLASENSRRGMSQNMESKGSIQYTEVSTNFGTEYTPEAR.

An N-terminal signal peptide occupies residues M1–A26. The Extracellular segment spans residues G27 to L523. N99, N186, N241, N267, and N294 each carry an N-linked (GlcNAc...) asparagine glycan. LRR repeat units follow at residues I375–P396, F399–L422, S423–L444, and S447–V467. N407, N421, N437, N450, and N469 each carry an N-linked (GlcNAc...) asparagine glycan. The chain crosses the membrane as a helical span at residues V524 to F544. At R545–R892 the chain is on the cytoplasmic side. Phosphothreonine is present on T573. The region spanning N582–L855 is the Protein kinase domain. Residues L588–V596 and K610 each bind ATP. A Phosphotyrosine modification is found at Y655. D707 acts as the Proton acceptor in catalysis. Phosphothreonine is present on residues T742 and T747. Position 755 is a phosphotyrosine (Y755).

This sequence belongs to the protein kinase superfamily. Ser/Thr protein kinase family.

Its subcellular location is the cell membrane. The catalysed reaction is L-seryl-[protein] + ATP = O-phospho-L-seryl-[protein] + ADP + H(+). The enzyme catalyses L-threonyl-[protein] + ATP = O-phospho-L-threonyl-[protein] + ADP + H(+). The sequence is that of Putative leucine-rich repeat receptor-like serine/threonine-protein kinase At2g04300 from Arabidopsis thaliana (Mouse-ear cress).